A 101-amino-acid polypeptide reads, in one-letter code: Small ribosomal subunit protein uS14 (101 aa).

This sequence belongs to the universal ribosomal protein uS14 family. In terms of assembly, part of the 30S ribosomal subunit. Contacts proteins S3 and S10.

Its function is as follows. Binds 16S rRNA, required for the assembly of 30S particles and may also be responsible for determining the conformation of the 16S rRNA at the A site. This is Small ribosomal subunit protein uS14 from Aeromonas salmonicida (strain A449).